Here is a 240-residue protein sequence, read N- to C-terminus: 6-phosphogluconolactonase (240 aa).

Belongs to the glucosamine/galactosamine-6-phosphate isomerase family. 6-phosphogluconolactonase subfamily.

The catalysed reaction is 6-phospho-D-glucono-1,5-lactone + H2O = 6-phospho-D-gluconate + H(+). The protein operates within carbohydrate degradation; pentose phosphate pathway; D-ribulose 5-phosphate from D-glucose 6-phosphate (oxidative stage): step 2/3. Hydrolysis of 6-phosphogluconolactone to 6-phosphogluconate. The sequence is that of 6-phosphogluconolactonase (pgl) from Synechocystis sp. (strain ATCC 27184 / PCC 6803 / Kazusa).